The following is a 309-amino-acid chain: Probable lipid kinase YegS-like (309 aa).

The 134-residue stretch at 1 to 134 folds into the DAGKc domain; the sequence is MAPSHWRLIL…VDLLRIDAEH (134 aa). ATP-binding positions include Thr-39, 65–71, and Thr-96; that span reads GDGTLSE. Mg(2+)-binding residues include Val-219, Asp-222, and Leu-224. The active-site Proton acceptor is Glu-280.

This sequence belongs to the diacylglycerol/lipid kinase family. YegS lipid kinase subfamily. Requires Mg(2+) as cofactor. It depends on Ca(2+) as a cofactor.

Its subcellular location is the cytoplasm. Probably phosphorylates lipids; the in vivo substrate is unknown. The polypeptide is Probable lipid kinase YegS-like (Xanthomonas oryzae pv. oryzae (strain MAFF 311018)).